The following is a 196-amino-acid chain: FMN-dependent NADH:quinone oxidoreductase (196 aa).

Serine 10 is a binding site for FMN.

It belongs to the azoreductase type 1 family. Homodimer. FMN is required as a cofactor.

The catalysed reaction is 2 a quinone + NADH + H(+) = 2 a 1,4-benzosemiquinone + NAD(+). It carries out the reaction N,N-dimethyl-1,4-phenylenediamine + anthranilate + 2 NAD(+) = 2-(4-dimethylaminophenyl)diazenylbenzoate + 2 NADH + 2 H(+). Its function is as follows. Quinone reductase that provides resistance to thiol-specific stress caused by electrophilic quinones. Functionally, also exhibits azoreductase activity. Catalyzes the reductive cleavage of the azo bond in aromatic azo compounds to the corresponding amines. In Cereibacter sphaeroides (strain ATCC 17023 / DSM 158 / JCM 6121 / CCUG 31486 / LMG 2827 / NBRC 12203 / NCIMB 8253 / ATH 2.4.1.) (Rhodobacter sphaeroides), this protein is FMN-dependent NADH:quinone oxidoreductase.